The sequence spans 149 residues: Large-conductance mechanosensitive channel (149 aa).

Transmembrane regions (helical) follow at residues 16 to 36 (VMDL…VNSV), 40 to 60 (LIMP…KFIL), and 89 to 109 (GSFI…FMMV).

This sequence belongs to the MscL family. As to quaternary structure, homopentamer.

It localises to the cell inner membrane. Functionally, channel that opens in response to stretch forces in the membrane lipid bilayer. May participate in the regulation of osmotic pressure changes within the cell. In Paraburkholderia phymatum (strain DSM 17167 / CIP 108236 / LMG 21445 / STM815) (Burkholderia phymatum), this protein is Large-conductance mechanosensitive channel.